We begin with the raw amino-acid sequence, 228 residues long: PKHD-type hydroxylase XAC2942 (228 aa).

The Fe2OG dioxygenase domain occupies 78 to 180 (RIYPPLFNRY…RVACFFWAQS (103 aa)). H96, D98, and H161 together coordinate Fe cation. R171 contacts 2-oxoglutarate.

Fe(2+) is required as a cofactor. L-ascorbate serves as cofactor.

This is PKHD-type hydroxylase XAC2942 from Xanthomonas axonopodis pv. citri (strain 306).